A 200-amino-acid polypeptide reads, in one-letter code: Recombination protein RecR (200 aa).

The C4-type zinc finger occupies Cys58 to Cys75. Residues Ser82–Pro177 form the Toprim domain.

Belongs to the RecR family.

May play a role in DNA repair. It seems to be involved in an RecBC-independent recombinational process of DNA repair. It may act with RecF and RecO. The polypeptide is Recombination protein RecR (Chlamydia trachomatis serovar L2 (strain ATCC VR-902B / DSM 19102 / 434/Bu)).